A 231-amino-acid chain; its full sequence is Uracil-DNA glycosylase (231 aa).

Asp74 functions as the Proton acceptor in the catalytic mechanism.

The protein belongs to the uracil-DNA glycosylase (UDG) superfamily. UNG family.

It localises to the cytoplasm. It carries out the reaction Hydrolyzes single-stranded DNA or mismatched double-stranded DNA and polynucleotides, releasing free uracil.. Excises uracil residues from the DNA which can arise as a result of misincorporation of dUMP residues by DNA polymerase or due to deamination of cytosine. The polypeptide is Uracil-DNA glycosylase (Campylobacter jejuni subsp. doylei (strain ATCC BAA-1458 / RM4099 / 269.97)).